We begin with the raw amino-acid sequence, 311 residues long: 4-hydroxy-tetrahydrodipicolinate synthase (311 aa).

Threonine 49 serves as a coordination point for pyruvate. Tyrosine 138 acts as the Proton donor/acceptor in catalysis. Lysine 166 serves as the catalytic Schiff-base intermediate with substrate. Position 207 (isoleucine 207) interacts with pyruvate.

It belongs to the DapA family. Homotetramer; dimer of dimers.

Its subcellular location is the cytoplasm. The enzyme catalyses L-aspartate 4-semialdehyde + pyruvate = (2S,4S)-4-hydroxy-2,3,4,5-tetrahydrodipicolinate + H2O + H(+). Its pathway is amino-acid biosynthesis; L-lysine biosynthesis via DAP pathway; (S)-tetrahydrodipicolinate from L-aspartate: step 3/4. Functionally, catalyzes the condensation of (S)-aspartate-beta-semialdehyde [(S)-ASA] and pyruvate to 4-hydroxy-tetrahydrodipicolinate (HTPA). The protein is 4-hydroxy-tetrahydrodipicolinate synthase of Limosilactobacillus fermentum (strain NBRC 3956 / LMG 18251) (Lactobacillus fermentum).